Here is a 203-residue protein sequence, read N- to C-terminus: Large ribosomal subunit protein uL18 (203 aa).

The protein belongs to the universal ribosomal protein uL18 family. As to quaternary structure, part of the 50S ribosomal subunit. Contacts the 5S and 23S rRNAs.

Functionally, this is one of the proteins that bind and probably mediate the attachment of the 5S RNA into the large ribosomal subunit, where it forms part of the central protuberance. The polypeptide is Large ribosomal subunit protein uL18 (Pyrococcus horikoshii (strain ATCC 700860 / DSM 12428 / JCM 9974 / NBRC 100139 / OT-3)).